The sequence spans 146 residues: Hut operon positive regulatory protein (146 aa).

Belongs to the HutP family. In terms of assembly, homohexamer.

Functionally, antiterminator that binds to cis-acting regulatory sequences on the mRNA in the presence of histidine, thereby suppressing transcription termination and activating the hut operon for histidine utilization. In Bacillus cereus (strain AH820), this protein is Hut operon positive regulatory protein.